We begin with the raw amino-acid sequence, 85 residues long: Small ribosomal subunit protein uS17 (85 aa).

Belongs to the universal ribosomal protein uS17 family. Part of the 30S ribosomal subunit.

Its function is as follows. One of the primary rRNA binding proteins, it binds specifically to the 5'-end of 16S ribosomal RNA. The polypeptide is Small ribosomal subunit protein uS17 (Natranaerobius thermophilus (strain ATCC BAA-1301 / DSM 18059 / JW/NM-WN-LF)).